A 726-amino-acid polypeptide reads, in one-letter code: Peroxisomal bifunctional enzyme (726 aa).

The tract at residues 1–284 is enoyl-CoA hydratase / isomerase; sequence MAEYLRLPHS…FAERSAPKWS (284 aa). Lys38 is modified (N6-succinyllysine). Gly103 contacts substrate. The residue at position 167 (Lys167) is an N6-acetyllysine; alternate. Lys167 is modified (N6-succinyllysine; alternate). At Lys173 the chain carries N6-acetyllysine. Residue Lys185 is modified to N6-succinyllysine. Lys221 is modified (N6-acetyllysine; alternate). Lys221 carries the N6-succinyllysine; alternate modification. Lys282, Lys292, and Lys333 each carry N6-succinyllysine. The interval 285–575 is 3-hydroxyacyl-CoA dehydrogenase; the sequence is TPSGASWKTA…DMLCELGRFG (291 aa). N6-acetyllysine is present on residues Lys348 and Lys352. The interval 352–371 is disordered; sequence KSRQQCGQQRSGPKPRFSSS. Over residues 353 to 371 the composition is skewed to polar residues; sequence SRQQCGQQRSGPKPRFSSS. An N6-acetyllysine modification is found at Lys467. The residue at position 535 (Lys535) is an N6-succinyllysine. N6-acetyllysine; alternate occurs at positions 587, 594, and 713. Lys587, Lys594, and Lys713 each carry N6-succinyllysine; alternate. The Microbody targeting signal motif lies at 724 to 726; sequence SKL. Lys725 carries the post-translational modification N6-succinyllysine.

In the N-terminal section; belongs to the enoyl-CoA hydratase/isomerase family. It in the C-terminal section; belongs to the 3-hydroxyacyl-CoA dehydrogenase family. As to quaternary structure, monomer. In terms of processing, acetylated, leading to enhanced enzyme activity. Acetylation is enhanced by up to 80% after treatment either with trichostin A (TSA) or with nicotinamide (NAM) with highest increase on Lys-348. Acetylation and enzyme activity increased by about 1.5% on addition of fatty acids.

Its subcellular location is the peroxisome. It catalyses the reaction a (3S)-3-hydroxyacyl-CoA = a (2E)-enoyl-CoA + H2O. It carries out the reaction a 4-saturated-(3S)-3-hydroxyacyl-CoA = a (3E)-enoyl-CoA + H2O. The enzyme catalyses a (3Z)-enoyl-CoA = a 4-saturated (2E)-enoyl-CoA. The catalysed reaction is a (3E)-enoyl-CoA = a 4-saturated (2E)-enoyl-CoA. It catalyses the reaction a (3S)-3-hydroxyacyl-CoA + NAD(+) = a 3-oxoacyl-CoA + NADH + H(+). It carries out the reaction (2S,3S)-3-hydroxy-2-methylbutanoyl-CoA = (2E)-2-methylbut-2-enoyl-CoA + H2O. The enzyme catalyses (3S)-hydroxyhexadecanoyl-CoA + NAD(+) = 3-oxohexadecanoyl-CoA + NADH + H(+). The catalysed reaction is (3S)-hydroxyhexadecanoyl-CoA = (2E)-hexadecenoyl-CoA + H2O. It catalyses the reaction (2E)-hexadecenedioyl-CoA + H2O = (3S)-hydroxyhexadecanedioyl-CoA. It carries out the reaction (3S)-hydroxyhexadecanedioyl-CoA + NAD(+) = 3-oxohexadecanedioyl-CoA + NADH + H(+). The enzyme catalyses (3E,5Z)-tetradecadienoyl-CoA = (2E,5Z)-tetradecadienoyl-CoA. The catalysed reaction is (3E,5Z)-octadienoyl-CoA = (2E,5Z)-octadienoyl-CoA. It catalyses the reaction (3S)-hydroxydecanoyl-CoA + NAD(+) = 3-oxodecanoyl-CoA + NADH + H(+). It carries out the reaction (3E)-decenoyl-CoA = (2E)-decenoyl-CoA. The enzyme catalyses (3Z)-hexenoyl-CoA = (2E)-hexenoyl-CoA. The catalysed reaction is (3E)-hexenoyl-CoA = (2E)-hexenoyl-CoA. It catalyses the reaction (3S)-hydroxydecanoyl-CoA = (2E)-decenoyl-CoA + H2O. It carries out the reaction (3S)-hydroxyhexanoyl-CoA = (2E)-hexenoyl-CoA + H2O. It functions in the pathway lipid metabolism; fatty acid beta-oxidation. Its activity is regulated as follows. Enzyme activity enhanced by acetylation. Its function is as follows. Peroxisomal trifunctional enzyme possessing 2-enoyl-CoA hydratase, 3-hydroxyacyl-CoA dehydrogenase, and delta 3, delta 2-enoyl-CoA isomerase activities. Catalyzes two of the four reactions of the long chain fatty acids peroxisomal beta-oxidation pathway. Can also use branched-chain fatty acids such as 2-methyl-2E-butenoyl-CoA as a substrate, which is hydrated into (2S,3S)-3-hydroxy-2-methylbutanoyl-CoA. Optimal isomerase for 2,5 double bonds into 3,5 form isomerization in a range of enoyl-CoA species. Also able to isomerize both 3-cis and 3-trans double bonds into the 2-trans form in a range of enoyl-CoA species. Regulates the amount of medium-chain dicarboxylic fatty acids which are essential regulators of all fatty acid oxidation pathways. Also involved in the degradation of long-chain dicarboxylic acids through peroxisomal beta-oxidation. The sequence is that of Peroxisomal bifunctional enzyme (EHHADH) from Cavia porcellus (Guinea pig).